The chain runs to 209 residues: 2-phospho-L-lactate guanylyltransferase (209 aa).

The protein belongs to the CofC family. In terms of assembly, homodimer.

The enzyme catalyses (2S)-2-phospholactate + GTP + H(+) = (2S)-lactyl-2-diphospho-5'-guanosine + diphosphate. It functions in the pathway cofactor biosynthesis; coenzyme F420 biosynthesis. Guanylyltransferase that catalyzes the activation of (2S)-2-phospholactate (2-PL) as (2S)-lactyl-2-diphospho-5'-guanosine, via the condensation of 2-PL with GTP. It is involved in the biosynthesis of coenzyme F420, a hydride carrier cofactor. The polypeptide is 2-phospho-L-lactate guanylyltransferase (Methanosphaerula palustris (strain ATCC BAA-1556 / DSM 19958 / E1-9c)).